A 788-amino-acid polypeptide reads, in one-letter code: MGIELLCLFFLFLGRNDHVQGGCALGGAETCEDCLLIGPQCAWCAQENFTHPSGVGERCDTPANLLAKGCQLNFIENPVSQVEILKNKPLSVGRQKNSSDIVQIAPQSLILKLRPGGAQTLQVHVRQTEDYPVDLYYLMDLSASMDDDLNTIKELGSRLSKEMSKLTSNFRLGFGSFVEKPVSPFVKTTPEEIANPCSSIPYFCLPTFGFKHILPLTNDAERFNEIVKNQKISANIDTPEGGFDAIMQAAVCKEKIGWRNDSLHLLVFVSDADSHFGMDSKLAGIVIPNDGLCHLDSKNEYSMSTVLEYPTIGQLIDKLVQNNVLLIFAVTQEQVHLYENYAKLIPGATVGLLQKDSGNILQLIISAYEELRSEVELEVLGDTEGLNLSFTAICNNGTLFQHQKKCSHMKVGDTASFSVTVNIPHCERRSRHIIIKPVGLGDALELLVSPECNCDCQKEVEVNSSKCHHGNGSFQCGVCACHPGHMGPRCECGEDMLSTDSCKEAPDHPSCSGRGDCYCGQCICHLSPYGNIYGPYCQCDNFSCVRHKGLLCGGNGDCDCGECVCRSGWTGEYCNCTTSTDSCVSEDGVLCSGRGDCVCGKCVCTNPGASGPTCERCPTCGDPCNSKRSCIECHLSAAGQAREECVDKCKLAGATISEEEDFSKDGSVSCSLQGENECLITFLITTDNEGKTIIHSINEKDCPKPPNIPMIMLGVSLAILLIGVVLLCIWKLLVSFHDRKEVAKFEAERSKAKWQTGTNPLYRGSTSTFKNVTYKHREKQKVDLSTDC.

The signal sequence occupies residues 1–21 (MGIELLCLFFLFLGRNDHVQG). A PSI domain is found at 22–71 (GCALGGAETCEDCLLIGPQCAWCAQENFTHPSGVGERCDTPANLLAKGCQ). The Extracellular portion of the chain corresponds to 22–709 (GCALGGAETC…KDCPKPPNIP (688 aa)). 19 disulfides stabilise this stretch: Cys-23–Cys-41, Cys-31–Cys-454, Cys-34–Cys-59, Cys-44–Cys-70, Cys-197–Cys-204, Cys-252–Cys-293, Cys-394–Cys-406, Cys-426–Cys-452, Cys-456–Cys-476, Cys-467–Cys-479, Cys-481–Cys-490, Cys-492–Cys-519, Cys-502–Cys-517, Cys-511–Cys-522, Cys-524–Cys-537, Cys-539–Cys-560, Cys-544–Cys-558, Cys-552–Cys-563, and Cys-565–Cys-574. 2 N-linked (GlcNAc...) asparagine glycosylation sites follow: Asn-48 and Asn-97. In terms of domain architecture, VWFA spans 131-371 (YPVDLYYLMD…QLIISAYEEL (241 aa)). The Mg(2+) site is built by Asp-140, Ser-142, and Ser-144. Ca(2+)-binding residues include Ser-144, Asp-147, Asp-148, and Glu-179. Asn-235, Asp-237, Pro-239, and Glu-240 together coordinate Ca(2+). Glu-240 is a binding site for Mg(2+). The N-linked (GlcNAc...) asparagine glycan is linked to Asn-260. Ca(2+)-binding residues include Asp-271 and Lys-355. Asn-387 and Asn-396 each carry an N-linked (GlcNAc...) asparagine glycan. I-EGF domains are found at residues 456 to 491 (CQKE…PRCE), 492 to 538 (CGED…PYCQ), 539 to 575 (CDNF…EYCN), and 576 to 615 (CTTS…PTCE). N-linked (GlcNAc...) asparagine glycans are attached at residues Asn-463 and Asn-471. Asn-541 is a glycosylation site (N-linked (GlcNAc...) asparagine). An N-linked (GlcNAc...) asparagine glycan is attached at Asn-575. 9 cysteine pairs are disulfide-bonded: Cys-576–Cys-599, Cys-583–Cys-597, Cys-591–Cys-602, Cys-604–Cys-614, Cys-617–Cys-620, Cys-624–Cys-670, Cys-630–Cys-649, Cys-633–Cys-645, and Cys-678–Cys-702. Residues 710–730 (MIMLGVSLAILLIGVVLLCIW) form a helical membrane-spanning segment. The tract at residues 731–758 (KLLVSFHDRKEVAKFEAERSKAKWQTGT) is interaction with HAX1. Over 731 to 788 (KLLVSFHDRKEVAKFEAERSKAKWQTGTNPLYRGSTSTFKNVTYKHREKQKVDLSTDC) the chain is Cytoplasmic.

The protein belongs to the integrin beta chain family. As to quaternary structure, heterodimer of an alpha and a beta subunit. Interacts with FLNB. Interacts with HAX1. ITGAV:ITGB6 interacts with FBN1. ITGAV:ITGB6 interacts with TGFB1. (Microbial infection) Integrin ITGAV:ITGB6 interacts with coxsackievirus A9, coxsackievirus B1 capsid proteins. In terms of assembly, (Microbial infection) Integrin ITGAV:ITGB6 interacts with herpes simplex virus-1/HHV-1 gH:gL proteins.

It localises to the cell membrane. Its subcellular location is the cell junction. It is found in the focal adhesion. Integrin alpha-V:beta-6 (ITGAV:ITGB6) is a receptor for fibronectin and cytotactin. It recognizes the sequence R-G-D in its ligands. Internalization of integrin alpha-V/beta-6 via clathrin-mediated endocytosis promotes carcinoma cell invasion. ITGAV:ITGB6 acts as a receptor for fibrillin-1 (FBN1) and mediates R-G-D-dependent cell adhesion to FBN1. Integrin alpha-V:beta-6 (ITGAV:ITGB6) mediates R-G-D-dependent release of transforming growth factor beta-1 (TGF-beta-1) from regulatory Latency-associated peptide (LAP), thereby playing a key role in TGF-beta-1 activation. Its function is as follows. (Microbial infection) Integrin ITGAV:ITGB6 acts as a receptor for Coxsackievirus A9 and Coxsackievirus B1. Functionally, (Microbial infection) Integrin ITGAV:ITGB6 acts as a receptor for Herpes simplex virus-1/HHV-1. In Homo sapiens (Human), this protein is Integrin beta-6 (ITGB6).